Here is a 239-residue protein sequence, read N- to C-terminus: tRNA (guanine-N(7)-)-methyltransferase (239 aa).

S-adenosyl-L-methionine-binding residues include E69, E94, D121, and D144. The active site involves D144. Residues K148, D180, and 217-220 each bind substrate; that span reads TNFE.

It belongs to the class I-like SAM-binding methyltransferase superfamily. TrmB family. As to quaternary structure, monomer.

It carries out the reaction guanosine(46) in tRNA + S-adenosyl-L-methionine = N(7)-methylguanosine(46) in tRNA + S-adenosyl-L-homocysteine. It functions in the pathway tRNA modification; N(7)-methylguanine-tRNA biosynthesis. In terms of biological role, catalyzes the formation of N(7)-methylguanine at position 46 (m7G46) in tRNA. The polypeptide is tRNA (guanine-N(7)-)-methyltransferase (Buchnera aphidicola subsp. Schizaphis graminum (strain Sg)).